Reading from the N-terminus, the 696-residue chain is Catalase (696 aa).

Active-site residues include H64 and N137. Residues 187 to 211 (SLAQGSQISSERGSPKAYSNTEPNK) form a disordered region. A compositionally biased stretch (polar residues) spans 189 to 208 (AQGSQISSERGSPKAYSNTE). Y353 contributes to the heme binding site.

It belongs to the catalase family. It depends on heme as a cofactor.

The enzyme catalyses 2 H2O2 = O2 + 2 H2O. Occurs in almost all aerobically respiring organisms and serves to protect cells from the toxic effects of hydrogen peroxide. The protein is Catalase of Penicillium janthinellum (Penicillium vitale).